The following is a 1125-amino-acid chain: tRNA (34-2'-O)-methyltransferase regulator WDR6 (1125 aa).

Met-1 carries the N-acetylmethionine modification. WD repeat units follow at residues 53–97 (VKRV…VVKV), 105–143 (RELW…LYDP), 147–189 (CMLQ…IWYP), 200–238 (APDR…LWKV), 247–285 (RVQN…VWSH), 289–327 (ILQA…LWHL), 335–376 (LGVS…LYDL), 381–422 (WEQL…VVPI), 425–470 (PTAA…ISAA), 476–520 (IFVK…LFPV), 559–598 (PVST…FVHG), 604–642 (VLRQ…VWSP), 645–684 (HEKL…LYRA), 739–785 (LIDI…VWAV), 848–897 (RNKH…LFLL), 905–950 (HLLA…FWDL), 974–1016 (GTPS…VFTL), 1040–1077 (EEYS…FWRL), and 1083–1125 (TFMN…NWYD).

The protein belongs to the WD repeat WDR6 family. As to quaternary structure, interacts with FTSJ1; the interaction is direct, and required for 2'-O-methylation of position 34 in substrate tRNAs. Interacts with IRS4. Interacts with STK11/LKB1.

Its subcellular location is the cytoplasm. Functionally, together with methyltransferase FTSJ1, methylates the 2'-O-ribose of nucleotides at position 34 of the tRNA anticodon loop of substrate tRNAs. Required for the correct positioning of the substrate tRNA for methylation. Required to suppress amino acid starvation-induced autophagy. Enhances the STK11/LKB1-induced cell growth suppression activity. The chain is tRNA (34-2'-O)-methyltransferase regulator WDR6 (Wdr6) from Mus musculus (Mouse).